A 1692-amino-acid polypeptide reads, in one-letter code: Protein TOPAZ1 (1692 aa).

Disordered regions lie at residues 1–135 (MRRP…PGLD), 600–629 (ELSR…TGNK), and 894–919 (EPNV…EPSD). Residues 31 to 40 (GAAGGCGPEA) are compositionally biased toward gly residues. The segment covering 95–116 (SDPRGLEAAKEAELPLQTERHT) has biased composition (basic and acidic residues). The segment covering 608 to 627 (VISNTTEDTQLTSETQSLTG) has biased composition (polar residues). The span at 902-919 (QSTDSKYMETPVKKEPSD) shows a compositional bias: basic and acidic residues.

The protein localises to the cytoplasm. It localises to the cytosol. Its function is as follows. Important for normal spermatogenesis and male fertility. Specifically required for progression to the post-meiotic stages of spermatocyte development. Seems to be necessary for normal expression levels of a number of testis-expressed gene transcripts, although its role in this process is unclear. The polypeptide is Protein TOPAZ1 (TOPAZ1) (Homo sapiens (Human)).